A 462-amino-acid polypeptide reads, in one-letter code: L-seryl-tRNA(Sec) selenium transferase (462 aa).

Lys-295 is modified (N6-(pyridoxal phosphate)lysine).

It belongs to the SelA family. Homodecamer; pentamer of dimers. Binds only one seryl-tRNA(Sec) per dimer. Pyridoxal 5'-phosphate serves as cofactor.

It is found in the cytoplasm. The enzyme catalyses L-seryl-tRNA(Sec) + selenophosphate + H(+) = L-selenocysteinyl-tRNA(Sec) + phosphate. It participates in aminoacyl-tRNA biosynthesis; selenocysteinyl-tRNA(Sec) biosynthesis; selenocysteinyl-tRNA(Sec) from L-seryl-tRNA(Sec) (bacterial route): step 1/1. Its function is as follows. Converts seryl-tRNA(Sec) to selenocysteinyl-tRNA(Sec) required for selenoprotein biosynthesis. The polypeptide is L-seryl-tRNA(Sec) selenium transferase (Klebsiella pneumoniae subsp. pneumoniae (strain ATCC 700721 / MGH 78578)).